The chain runs to 202 residues: Putative chromophore lyase CpcV (202 aa).

This sequence belongs to the CpcS/CpeS biliprotein lyase family.

Functionally, covalently attaches a chromophore to Cys residue(s) of phycobiliproteins. This is Putative chromophore lyase CpcV (cpcV) from Picosynechococcus sp. (strain ATCC 27264 / PCC 7002 / PR-6) (Agmenellum quadruplicatum).